We begin with the raw amino-acid sequence, 518 residues long: Bifunctional purine biosynthesis protein PurH (518 aa).

An MGS-like domain is found at 1–146; sequence MARIALISVS…KNHESVSILT (146 aa).

It belongs to the PurH family.

It catalyses the reaction (6R)-10-formyltetrahydrofolate + 5-amino-1-(5-phospho-beta-D-ribosyl)imidazole-4-carboxamide = 5-formamido-1-(5-phospho-D-ribosyl)imidazole-4-carboxamide + (6S)-5,6,7,8-tetrahydrofolate. The catalysed reaction is IMP + H2O = 5-formamido-1-(5-phospho-D-ribosyl)imidazole-4-carboxamide. It functions in the pathway purine metabolism; IMP biosynthesis via de novo pathway; 5-formamido-1-(5-phospho-D-ribosyl)imidazole-4-carboxamide from 5-amino-1-(5-phospho-D-ribosyl)imidazole-4-carboxamide (10-formyl THF route): step 1/1. Its pathway is purine metabolism; IMP biosynthesis via de novo pathway; IMP from 5-formamido-1-(5-phospho-D-ribosyl)imidazole-4-carboxamide: step 1/1. This is Bifunctional purine biosynthesis protein PurH from Prochlorococcus marinus (strain MIT 9211).